The primary structure comprises 473 residues: Cytochrome c-552 (473 aa).

Positions 1 to 33 (MQHGDEMMKKMTGKSFALSALVAASFMAAGAMA) are cleaved as a signal peptide. Residue His93 participates in heme c binding. Cys121, Cys124, and Lys125 together coordinate heme. Residues Cys159, Cys162, His163, Cys201, Cys204, and His205 each contribute to the heme c site. Ca(2+) is bound by residues Glu207, Tyr208, Lys256, and Gln258. Tyr208 provides a ligand contact to substrate. Residue His259 participates in substrate binding. 9 residues coordinate heme c: His270, Cys277, Cys280, His281, His296, Cys309, Cys312, His313, and His388.

It belongs to the cytochrome c-552 family. Requires Ca(2+) as cofactor. It depends on heme c as a cofactor.

It is found in the periplasm. It carries out the reaction 6 Fe(III)-[cytochrome c] + NH4(+) + 2 H2O = 6 Fe(II)-[cytochrome c] + nitrite + 8 H(+). It functions in the pathway nitrogen metabolism; nitrate reduction (assimilation). Its function is as follows. Catalyzes the reduction of nitrite to ammonia, consuming six electrons in the process. The chain is Cytochrome c-552 from Shewanella sp. (strain ANA-3).